We begin with the raw amino-acid sequence, 327 residues long: MTIGSFFSSLLFWRNSQDQEAQRGRMQEIDLSVHTIKSHGGRVASKHKHDWIILVILIAIEIGLNLISPFYRYVGKDMMTDLKYPFKDNTVPIWSVPVYAVLLPIIVFVCFYLKRTCVYDLHHSILGLLFAVLITGVITDSIKVATGRPRPNFYWRCFPDGKELYDALGGVVCHGKAAEVKEGHKSFPSGHTSWSFAGLTFLSLYLSGKIKAFNNEGHVAKLCLVIFPLLAACLVGISRVDDYWHHWQDVFAGALIGTLVAAFCYRQFYPNPYHEEGWGPYAYFKAAQERGVPVTSSQNGDALRAMSLQMDSTSLENMESGTSTAPR.

The next 6 helical transmembrane spans lie at 51–71 (WIILVILIAIEIGLNLISPFY), 93–113 (IWSVPVYAVLLPIIVFVCFYL), 118–138 (VYDLHHSILGLLFAVLITGVI), 187–207 (FPSGHTSWSFAGLTFLSLYLS), 217–237 (GHVAKLCLVIFPLLAACLVGI), and 244–264 (WHHWQDVFAGALIGTLVAAFC).

Belongs to the PA-phosphatase related phosphoesterase family. As to expression, strongly expressed in leaves, moderately in roots, weakly in floral hamps and flower buds, and not detected in adult flowers and seedpods.

Its subcellular location is the membrane. PA phosphatase activity inhibited by N-ethylmaleimide with an IC(50) value of 10 mM. In terms of biological role, plays a general role in cellular responses to stress, may be by attenuating the signal produced by phospholipases. Exhibits both diacylglycerol pyrophosphate (DGPP) phosphatase and phosphatidate (PA) phosphatase activities. Substrate preference is diacylglycerol pyrophosphate &gt; phosphatidate. This chain is Lipid phosphate phosphatase 1 (LPP1), found in Arabidopsis thaliana (Mouse-ear cress).